Consider the following 358-residue polypeptide: Trace amine-associated receptor 7d (358 aa).

Residues 1-47 (MRVDDDRFPWDQDSILSRDLLSASSLQLCYENLNRSCVRSPYSPGPR) lie on the Extracellular side of the membrane. N-linked (GlcNAc...) asparagine glycosylation is present at asparagine 34. 2 cysteine pairs are disulfide-bonded: cysteine 37-cysteine 201 and cysteine 120-cysteine 205. The helical transmembrane segment at 48 to 68 (LILYAVFGFGAVLAVCGNLMV) threads the bilayer. Topologically, residues 69-83 (MTSILHFRQLHSPAN) are cytoplasmic. Residues 84 to 104 (FLVASLACADFLVGLTVMPFS) form a helical membrane-spanning segment. Over 105-122 (MVRSVEGCWYFGDTYCKL) the chain is Extracellular. The helical transmembrane segment at 123–143 (HTCFDVSFCYCSLFHLCFISV) threads the bilayer. Topologically, residues 144–166 (DRYIAVSDPLIYPTRFTASVSGK) are cytoplasmic. The chain crosses the membrane as a helical span at residues 167–187 (CITFSWLLSIIYGFPLIYTGA). The Extracellular portion of the chain corresponds to 188 to 212 (SEAGLEDLVSALTCVGGCQIPMNQK). A helical transmembrane segment spans residues 213 to 233 (FVLINFLLFLVPTLVMMTVYS). Residues 234–274 (KIFLIARQQAQNIEKMRKQTARASESYKDRVCKRERKAAKT) lie on the Cytoplasmic side of the membrane. A helical transmembrane segment spans residues 275–295 (LGIAVAAFLLSWLPYFIDSII). The Extracellular portion of the chain corresponds to 296-309 (DAFLGFITPTYVYE). The helical transmembrane segment at 310–333 (ILIWIVYYNSSMNPLIYAFFYPWF) threads the bilayer. The Cytoplasmic portion of the chain corresponds to 334–358 (RKATKLIVTGKILRENSSTINLFPE).

This sequence belongs to the G-protein coupled receptor 1 family.

It localises to the cell membrane. Olfactory receptor specific for N,N-dimethylalkylamines trace amines, such as N,N-dimethylcyclohexylamine. Trace amine compounds are enriched in animal body fluids and act on trace amine-associated receptors (TAARs) to elicit both intraspecific and interspecific innate behaviors. Ligand-binding causes a conformation change that triggers signaling via G(s)-class of G alpha proteins (GNAL or GNAS). This is Trace amine-associated receptor 7d from Rattus norvegicus (Rat).